Reading from the N-terminus, the 599-residue chain is Elongation factor 4 (599 aa).

The region spanning 2–184 (NYKRNFSIIA…RLVRDIPAPK (183 aa)) is the tr-type G domain. GTP is bound by residues 14-19 (DHGKST) and 131-134 (NKID).

This sequence belongs to the TRAFAC class translation factor GTPase superfamily. Classic translation factor GTPase family. LepA subfamily.

Its subcellular location is the cell membrane. The enzyme catalyses GTP + H2O = GDP + phosphate + H(+). In terms of biological role, required for accurate and efficient protein synthesis under certain stress conditions. May act as a fidelity factor of the translation reaction, by catalyzing a one-codon backward translocation of tRNAs on improperly translocated ribosomes. Back-translocation proceeds from a post-translocation (POST) complex to a pre-translocation (PRE) complex, thus giving elongation factor G a second chance to translocate the tRNAs correctly. Binds to ribosomes in a GTP-dependent manner. In Hamiltonella defensa subsp. Acyrthosiphon pisum (strain 5AT), this protein is Elongation factor 4.